Consider the following 379-residue polypeptide: Deoxyguanosinetriphosphate triphosphohydrolase-like protein (379 aa).

An HD domain is found at 69-200; it reads RLTHTIEVAQ…ANLADEIAYS (132 aa).

This sequence belongs to the dGTPase family. Type 2 subfamily.

The polypeptide is Deoxyguanosinetriphosphate triphosphohydrolase-like protein (Azoarcus sp. (strain BH72)).